The primary structure comprises 288 residues: Bifunctional protein FolD (288 aa).

Residues 166–168 (GRS), Ser191, and Ile232 contribute to the NADP(+) site.

This sequence belongs to the tetrahydrofolate dehydrogenase/cyclohydrolase family. As to quaternary structure, homodimer.

It catalyses the reaction (6R)-5,10-methylene-5,6,7,8-tetrahydrofolate + NADP(+) = (6R)-5,10-methenyltetrahydrofolate + NADPH. It carries out the reaction (6R)-5,10-methenyltetrahydrofolate + H2O = (6R)-10-formyltetrahydrofolate + H(+). It participates in one-carbon metabolism; tetrahydrofolate interconversion. In terms of biological role, catalyzes the oxidation of 5,10-methylenetetrahydrofolate to 5,10-methenyltetrahydrofolate and then the hydrolysis of 5,10-methenyltetrahydrofolate to 10-formyltetrahydrofolate. This chain is Bifunctional protein FolD, found in Rickettsia peacockii (strain Rustic).